The primary structure comprises 143 residues: Transcription antitermination protein NusB (143 aa).

This sequence belongs to the NusB family.

Involved in transcription antitermination. Required for transcription of ribosomal RNA (rRNA) genes. Binds specifically to the boxA antiterminator sequence of the ribosomal RNA (rrn) operons. The protein is Transcription antitermination protein NusB of Dehalococcoides mccartyi (strain ATCC BAA-2266 / KCTC 15142 / 195) (Dehalococcoides ethenogenes (strain 195)).